The following is a 39-amino-acid chain: Cytochrome b559 subunit beta (39 aa).

Residues 14-30 (WLAVHGLAVPTVFFLGS) form a helical membrane-spanning segment. His18 provides a ligand contact to heme.

It belongs to the PsbE/PsbF family. Heterodimer of an alpha subunit and a beta subunit. PSII is composed of 1 copy each of membrane proteins PsbA, PsbB, PsbC, PsbD, PsbE, PsbF, PsbH, PsbI, PsbJ, PsbK, PsbL, PsbM, PsbT, PsbX, PsbY, PsbZ, Psb30/Ycf12, at least 3 peripheral proteins of the oxygen-evolving complex and a large number of cofactors. It forms dimeric complexes. It depends on heme b as a cofactor.

It is found in the plastid. It localises to the chloroplast thylakoid membrane. Its function is as follows. This b-type cytochrome is tightly associated with the reaction center of photosystem II (PSII). PSII is a light-driven water:plastoquinone oxidoreductase that uses light energy to abstract electrons from H(2)O, generating O(2) and a proton gradient subsequently used for ATP formation. It consists of a core antenna complex that captures photons, and an electron transfer chain that converts photonic excitation into a charge separation. This Pinus koraiensis (Korean pine) protein is Cytochrome b559 subunit beta.